The chain runs to 143 residues: UPF0251 protein Rru_A1194 (143 aa).

The tract at residues 100–143 (LDGSACPNRRQRRGPCARRGAAGALARQTGDEPPSSPTDNEKDD) is disordered. Over residues 116-126 (ARRGAAGALAR) the composition is skewed to low complexity.

Belongs to the UPF0251 family.

This is UPF0251 protein Rru_A1194 from Rhodospirillum rubrum (strain ATCC 11170 / ATH 1.1.1 / DSM 467 / LMG 4362 / NCIMB 8255 / S1).